Consider the following 316-residue polypeptide: PAK4-inhibitor inka2 (316 aa).

Disordered regions lie at residues 43–74 (RSSPPPSPDIEKPCVVPPRRAPRRDNRISHRT) and 108–130 (YSEVSGGSLRGEEDDIVEEESET). Positions 65-74 (RRDNRISHRT) are enriched in basic and acidic residues. Positions 119–129 (EEDDIVEEESE) are enriched in acidic residues. The tract at residues 182–219 (DSQDWTGCLLSQSRSRQPLVLGDNSFADLVKQWMDLPE) is inka box.

The protein belongs to the INKA family.

The protein localises to the nucleus. Inhibitor of the serine/threonine-protein kinase pak4/pak5. Acts by binding pak4/pak5 in a substrate-like manner, inhibiting the protein kinase activity. This is PAK4-inhibitor inka2 from Xenopus laevis (African clawed frog).